Reading from the N-terminus, the 129-residue chain is Small ribosomal subunit protein uS11 (129 aa).

It belongs to the universal ribosomal protein uS11 family. Part of the 30S ribosomal subunit. Interacts with proteins S7 and S18. Binds to IF-3.

Functionally, located on the platform of the 30S subunit, it bridges several disparate RNA helices of the 16S rRNA. Forms part of the Shine-Dalgarno cleft in the 70S ribosome. The sequence is that of Small ribosomal subunit protein uS11 from Colwellia psychrerythraea (strain 34H / ATCC BAA-681) (Vibrio psychroerythus).